Reading from the N-terminus, the 398-residue chain is Bone morphogenetic protein 2-B (398 aa).

Positions Met-1–Gly-23 are cleaved as a signal peptide. The propeptide occupies Leu-24–Arg-284. Asn-137, Asn-202, Asn-237, and Asn-340 each carry an N-linked (GlcNAc...) asparagine glycan. 3 disulfides stabilise this stretch: Cys-298/Cys-363, Cys-327/Cys-395, and Cys-331/Cys-397.

It belongs to the TGF-beta family. As to quaternary structure, homodimer; disulfide-linked.

The protein resides in the secreted. Induces cartilage and bone formation. The chain is Bone morphogenetic protein 2-B (bmp2-b) from Xenopus laevis (African clawed frog).